The sequence spans 131 residues: Small ribosomal subunit protein uS8 (131 aa).

Belongs to the universal ribosomal protein uS8 family. Part of the 30S ribosomal subunit. Contacts proteins S5 and S12.

Its function is as follows. One of the primary rRNA binding proteins, it binds directly to 16S rRNA central domain where it helps coordinate assembly of the platform of the 30S subunit. The polypeptide is Small ribosomal subunit protein uS8 (Bordetella avium (strain 197N)).